The following is a 394-amino-acid chain: Probable dual specificity protein phosphatase DDB_G0281963 (394 aa).

Positions 2-142 (NDVSRIFPGF…LKKYELILKK (141 aa)) constitute a Tyrosine-protein phosphatase domain. Cys-86 functions as the Phosphocysteine intermediate in the catalytic mechanism. The disordered stretch occupies residues 147 to 191 (PQIVEKESEEEDDDEDDDDDDYDSDEDDDDDSEDDDFEEEFDNVV). Residues 153 to 188 (ESEEEDDDEDDDDDDYDSDEDDDDDSEDDDFEEEFD) are compositionally biased toward acidic residues.

Belongs to the protein-tyrosine phosphatase family. Non-receptor class dual specificity subfamily.

It catalyses the reaction O-phospho-L-tyrosyl-[protein] + H2O = L-tyrosyl-[protein] + phosphate. The enzyme catalyses O-phospho-L-seryl-[protein] + H2O = L-seryl-[protein] + phosphate. The catalysed reaction is O-phospho-L-threonyl-[protein] + H2O = L-threonyl-[protein] + phosphate. Functionally, has a dual specificity toward Ser/Thr and Tyr-containing proteins. The chain is Probable dual specificity protein phosphatase DDB_G0281963 from Dictyostelium discoideum (Social amoeba).